The sequence spans 6753 residues: Putative histone-lysine N-methyltransferase 1 (6753 aa).

Disordered regions lie at residues 1–28 (MSEN…CKKE), 418–458 (FGNM…GKKN), 470–522 (DTTL…CNPS), 736–1024 (DDDE…KKDK), 1487–1545 (FNNN…NTAT), and 1557–1642 (YKKV…GKSK). Residues 435–449 (NNTSKNNISNNNNNM) are compositionally biased toward low complexity. Basic and acidic residues predominate over residues 475 to 502 (QAKKESIKTVSKNERKNNMNKHSHDNKV). Residues 504-516 (KLNKRMSNKRRNN) show a composition bias toward basic residues. Residues 739–794 (ECKKENKDNISESSKRSNNIGEKKMLHVEKSEEHDDMTSDSNKEDTKIEEGRKKSN) are compositionally biased toward basic and acidic residues. Positions 798–808 (IDVDDGEEEEN) are enriched in acidic residues. Over residues 809 to 833 (VNNNDNNNDNNNDNDNSSDNNNNDD) the composition is skewed to low complexity. Basic and acidic residues-rich tracts occupy residues 853 to 866 (EKKD…DKNL) and 885 to 900 (IKKD…KKNI). A compositionally biased stretch (low complexity) spans 912-932 (RSNSSSTSTSNSSSKSKSSNC). Basic and acidic residues-rich tracts occupy residues 945-955 (KMDEKNSEQKK) and 964-975 (TCNEGKSKKDST). Composition is skewed to basic residues over residues 1002 to 1019 (EKKK…RKGI) and 1492 to 1506 (KNKR…KNTI). Residues 1522–1533 (SNSHSIEVSSSE) are compositionally biased toward low complexity. Residues 1566–1599 (KNGENKNGENKNGDIKNDDIKNDDIKNDDIRNDD) are compositionally biased toward basic and acidic residues. Residues 1615-1632 (ESNNIDNNNSSNDSLSDV) show a composition bias toward low complexity. PHD-type zinc fingers lie at residues 1671–1728 (CYRC…CLKC), 1761–1819 (KNFC…CSIG), and 2510–2579 (KECC…CIKC). Residues 1764–1817 (CIMCNEKYDEDDSKKWVQCDVCKFWIHLSCDKNESRNIETLSNKNIDYKCPTCS) form an RING-type; degenerate zinc finger. The region spanning 1816–1919 (CSIGTFHDKI…KKGRVIIKNM (104 aa)) is the Bromo domain. The span at 2694–2705 (ECNKNEKKKNDN) shows a compositional bias: basic and acidic residues. Disordered regions lie at residues 2694-2768 (ECNK…KDTK), 3053-3072 (EMES…CNNN), 4182-4254 (NEQN…LKTT), 4295-4349 (ENDE…ENEK), and 5331-5460 (NMNM…NNDK). Residues 2720–2735 (NNNNNNNGDDNNNIDN) show a composition bias toward low complexity. Residues 2758-2768 (NEEKKNNKDTK) are compositionally biased toward basic and acidic residues. Residues 3057–3072 (NNNNNNNNNNSDCNNN) are compositionally biased toward low complexity. 3 stretches are compositionally biased toward basic and acidic residues: residues 4212–4223 (SKKDMLIKKEMN), 4239–4254 (SPKK…LKTT), and 4297–4321 (DENK…EKKK). Residues 4322–4338 (KENKKGREKSVKVRKTK) show a composition bias toward basic residues. Low complexity-rich tracts occupy residues 5331 to 5340 (NMNMLDNNMN) and 5348 to 5400 (ENNN…NNNN). Residues 5401-5411 (KSKKNTQKKKD) show a composition bias toward basic residues. Low complexity predominate over residues 5416–5426 (VKINQNNSNNK). Over residues 5434–5460 (SKDNEELKSDNTKNNKTKDSDGNNNDK) the composition is skewed to basic and acidic residues. The C2HC pre-PHD-type; degenerate zinc-finger motif lies at 5496–5532 (YMKEKKCKNKEKNRGSKNNNIKNIKLIDMCEWKEDRN). The segment at 5558-5610 (STCFLCGYNNASVYCSNEDCNVKFHLNCAFYSTVIKDPSNNPFFRYLKCFNLV) adopts a PHD-type 4; degenerate zinc-finger fold. The span at 5905-5952 (NDNNNDINNNDNNNNENNNENINDNNNNNNNNNNNNNNNNSNNNNNNN) shows a compositional bias: low complexity. Disordered regions lie at residues 5905-5958 (NDNN…YYHN), 6103-6133 (DCSN…PEHI), and 6212-6235 (KFSD…KNQT). Residues 6118–6133 (ENRKNENDDDNIPEHI) show a composition bias toward basic and acidic residues. In terms of domain architecture, SET spans 6612–6729 (LRLYVKKSSI…AHEEITYDYQ (118 aa)). Residues 6737 to 6753 (KKLICLCGSSTCLGRMN) enclose the Post-SET domain.

This sequence belongs to the class V-like SAM-binding methyltransferase superfamily.

It catalyses the reaction L-lysyl-[histone] + S-adenosyl-L-methionine = N(6)-methyl-L-lysyl-[histone] + S-adenosyl-L-homocysteine + H(+). Its function is as follows. Probable histone methyltransferase. This Plasmodium falciparum (isolate 3D7) protein is Putative histone-lysine N-methyltransferase 1 (SET1).